A 657-amino-acid polypeptide reads, in one-letter code: THO complex subunit 1 (657 aa).

Residue M1 is modified to N-acetylmethionine. A Phosphoserine modification is found at S2. Phosphothreonine is present on T4. A Glycyl lysine isopeptide (Lys-Gly) (interchain with G-Cter in SUMO2) cross-link involves residue K31. K133 is subject to N6-acetyllysine. The tract at residues 133–167 (KNYLLRMCNDLLRRLSKSQNTVFCGRIQLFLARLF) is dock domain; interaction with THOC2. Residues 194 to 222 (QESTLGQKHTEDREEGMDVEEGEMGDEEA) are disordered. Positions 206 to 222 (REEGMDVEEGEMGDEEA) are enriched in acidic residues. The interval 227–397 (SIPIDYNLYR…WNSWKNEGCP (171 aa)) is dock domain; interaction with THOC2. The residue at position 300 (K300) is an N6-acetyllysine. Residue K408 forms a Glycyl lysine isopeptide (Lys-Gly) (interchain with G-Cter in SUMO2) linkage. Positions 414–430 (RKRTAPEDFLGKGPTKK) match the Nuclear localization signal motif. Positions 533 to 569 (LPPPSEEIKTGEDEDEEDNDALLKENESPDVRRDKPV) are disordered. A Phosphoserine modification is found at S537. T542 is subject to Phosphothreonine. A compositionally biased stretch (basic and acidic residues) spans 553–569 (ALLKENESPDVRRDKPV). The residue at position 560 (S560) is a Phosphoserine. The region spanning 570-653 (TGEQIEVFAN…DLAESLTNDN (84 aa)) is the Death domain. K580 participates in a covalent cross-link: Glycyl lysine isopeptide (Lys-Gly) (interchain with G-Cter in SUMO2). K595 is covalently cross-linked (Glycyl lysine isopeptide (Lys-Gly) (interchain with G-Cter in SUMO1); alternate). Residue K595 forms a Glycyl lysine isopeptide (Lys-Gly) (interchain with G-Cter in SUMO2); alternate linkage.

Belongs to the THOC1 family. As to quaternary structure, component of the THO subcomplex, which is composed of THOC1, THOC2, THOC3, THOC5, THOC6 and THOC7. The THO subcomplex interacts with DDX39B to form the THO-DDX39B complex which multimerizes into a 28-subunit tetrameric assembly. Component of the transcription/export (TREX) complex at least composed of ALYREF/THOC4, DDX39B, SARNP/CIP29, CHTOP and the THO subcomplex; in the complex interacts with THOC2, THOC5 and THOC7. TREX seems to have a dynamic structure involving ATP-dependent remodeling. Binds to the hypophosphorylated form of RB1. Interacts with RNA polymerase II. Interacts with LUZP4. Post-translationally, expression is altered specifically during apoptosis and is accompanied by the appearance of novel forms with smaller apparent molecular mass. In terms of processing, polyubiquitinated, leading to proteasomal degradation; probably involves NEDD4. In terms of tissue distribution, ubiquitous. Expressed in various cancer cell lines. Expressed at very low levels in normal breast epithelial cells and highly expressed in breast tumors. Expression is strongly associated with an aggressive phenotype of breast tumors and expression correlates with tumor size and the metastatic state of the tumor progression.

It is found in the nucleus speckle. The protein resides in the nucleus. It localises to the nucleoplasm. Its subcellular location is the nucleus matrix. The protein localises to the cytoplasm. In terms of biological role, component of the THO subcomplex of the TREX complex which is thought to couple mRNA transcription, processing and nuclear export, and which specifically associates with spliced mRNA and not with unspliced pre-mRNA. Required for efficient export of polyadenylated RNA. The THOC1-THOC2-THOC3 core complex alone is sufficient to bind export factor NXF1-NXT1 and promote ATPase activity of DDX39B/UAP56. TREX is recruited to spliced mRNAs by a transcription-independent mechanism, binds to mRNA upstream of the exon-junction complex (EJC) and is recruited in a splicing- and cap-dependent manner to a region near the 5' end of the mRNA where it functions in mRNA export to the cytoplasm via the TAP/NXF1 pathway. Regulates transcriptional elongation of a subset of genes. Involved in genome stability by preventing co-transcriptional R-loop formation. May play a role in hair cell formation, hence may be involved in hearing. Its function is as follows. Participates in an apoptotic pathway which is characterized by activation of caspase-6, increases in the expression of BAK1 and BCL2L1 and activation of NF-kappa-B. This pathway does not require p53/TP53, nor does the presence of p53/TP53 affect the efficiency of cell killing. Activates a G2/M cell cycle checkpoint prior to the onset of apoptosis. Apoptosis is inhibited by association with RB1. Functionally, (Microbial infection) The TREX complex is essential for the export of Kaposi's sarcoma-associated herpesvirus (KSHV) intronless mRNAs and infectious virus production. This Homo sapiens (Human) protein is THO complex subunit 1 (THOC1).